The following is an 80-amino-acid chain: FXYD domain-containing ion transport regulator 7 (80 aa).

Residues M1–Y22 are Extracellular-facing. Residues T3, T5, and T9 are each glycosylated (O-linked (GlcNAc) threonine). The helical transmembrane segment at A23–I45 threads the bilayer. The Cytoplasmic segment spans residues S46–V80. Positions S56 to V80 are disordered. At S73 the chain carries Phosphoserine.

It belongs to the FXYD family. In terms of assembly, regulatory subunit of the sodium/potassium-transporting ATPase which is composed of a catalytic alpha subunit, a non-catalytic beta subunit and an additional regulatory subunit. The regulatory subunit, a member of the FXYD protein family, modulates the enzymatic activity in a tissue- and isoform-specific way by changing affinities of the Na+/K+-ATPase toward Na(+), K(+) or ATP. In terms of processing, O-glycosylated; required for stabilization and translocation to the plasma membrane. In terms of tissue distribution, expressed specifically in brain. Expressed in both neurons and glia.

The protein localises to the cell membrane. Its function is as follows. Associates with and regulates the activity of the sodium/potassium-transporting ATPase (NKA) which catalyzes the hydrolysis of ATP coupled with the exchange of Na(+) and K(+) ions across the plasma membrane. Reduces the apparent affinity for external K(+), an effect that depends on the presence of external Na(+) and voltage. Increases the apparent affinity for intracellular Na(+). This chain is FXYD domain-containing ion transport regulator 7 (Fxyd7), found in Rattus norvegicus (Rat).